Consider the following 198-residue polypeptide: Outer-membrane lipoprotein carrier protein (198 aa).

The first 17 residues, methionine 1–alanine 17, serve as a signal peptide directing secretion.

The protein belongs to the LolA family. As to quaternary structure, monomer.

Its subcellular location is the periplasm. In terms of biological role, participates in the translocation of lipoproteins from the inner membrane to the outer membrane. Only forms a complex with a lipoprotein if the residue after the N-terminal Cys is not an aspartate (The Asp acts as a targeting signal to indicate that the lipoprotein should stay in the inner membrane). The chain is Outer-membrane lipoprotein carrier protein from Aliivibrio salmonicida (strain LFI1238) (Vibrio salmonicida (strain LFI1238)).